A 429-amino-acid chain; its full sequence is MAKIVDIKGREVLDSRGNPTVEADVILDNGIVGSACAPSGASTGSREALELRDGDKSRYLGKGVLKAVANINGPIRDLLLGKDAADQKALDHAMIELDGTENKAKLGANAILAVSLAAAKAAAQAKGVPLYAHIADLNGTPGQYSMPVPMMNIINGGEHADNNVDIQEFMVQPVGAKNFAEALRMGAEIFHHLKAVLKARGLNTAVGDEGGFAPNLSSNEDALAAIAEAVEKAGYKLGDDVTLALDCASSEFFKDGKYDLEGEGKVFDAAGFADYLAGLTQRYPIISIEDGMDESDWAGWKGLTDKIGAKVQLVGDDLFVTNTKILKEGIEKGIGNSILIKFNQIGSLTETLEAIQMAKAAGYTAVISHRSGETEDSTIADLAVGTAAGQIKTGSLCRSDRVSKYNQLLRIEEQLGAKAPYRGRAEFRG.

Residue Gln-167 coordinates (2R)-2-phosphoglycerate. Glu-209 (proton donor) is an active-site residue. Mg(2+) is bound by residues Asp-246, Glu-289, and Asp-316. 4 residues coordinate (2R)-2-phosphoglycerate: Lys-341, Arg-370, Ser-371, and Lys-392. The Proton acceptor role is filled by Lys-341.

The protein belongs to the enolase family. In terms of assembly, component of the RNA degradosome, a multiprotein complex involved in RNA processing and mRNA degradation. Mg(2+) is required as a cofactor.

It localises to the cytoplasm. The protein localises to the secreted. Its subcellular location is the cell surface. The enzyme catalyses (2R)-2-phosphoglycerate = phosphoenolpyruvate + H2O. It functions in the pathway carbohydrate degradation; glycolysis; pyruvate from D-glyceraldehyde 3-phosphate: step 4/5. In terms of biological role, catalyzes the reversible conversion of 2-phosphoglycerate (2-PG) into phosphoenolpyruvate (PEP). It is essential for the degradation of carbohydrates via glycolysis. This is Enolase from Pseudomonas aeruginosa (strain LESB58).